Here is a 507-residue protein sequence, read N- to C-terminus: UDP-N-acetylhexosamine pyrophosphorylase-like protein 1 (507 aa).

The segment at 56–91 (ACARPHGPPPDLAARLRPLPPERVGRASRSDPETRR) is disordered. Residues 78 to 91 (RVGRASRSDPETRR) show a composition bias toward basic and acidic residues. The Substrate binding signature appears at 111–114 (LAGG). UTP contacts are provided by residues 111-114 (LAGG), Lys125, Gln199, and Gly225. A substrate-binding site is contributed by Asn226. Residue Asp256 coordinates UTP. The short motif at 306 to 307 (EY) is the Substrate binding element. Lys380 is a binding site for UTP. Lys410 contacts substrate.

It belongs to the UDPGP type 1 family.

In Homo sapiens (Human), this protein is UDP-N-acetylhexosamine pyrophosphorylase-like protein 1 (UAP1L1).